The chain runs to 946 residues: Bifunctional glutamine synthetase adenylyltransferase/adenylyl-removing enzyme (946 aa).

Positions 1–440 (MKPLSSPLQQ…VFNELIGDDE (440 aa)) are adenylyl removase. Residues 449–946 (SEQWRELWQD…ASWQKWLVEE (498 aa)) are adenylyl transferase.

This sequence belongs to the GlnE family. The cofactor is Mg(2+).

The catalysed reaction is [glutamine synthetase]-O(4)-(5'-adenylyl)-L-tyrosine + phosphate = [glutamine synthetase]-L-tyrosine + ADP. It catalyses the reaction [glutamine synthetase]-L-tyrosine + ATP = [glutamine synthetase]-O(4)-(5'-adenylyl)-L-tyrosine + diphosphate. In terms of biological role, involved in the regulation of glutamine synthetase GlnA, a key enzyme in the process to assimilate ammonia. When cellular nitrogen levels are high, the C-terminal adenylyl transferase (AT) inactivates GlnA by covalent transfer of an adenylyl group from ATP to specific tyrosine residue of GlnA, thus reducing its activity. Conversely, when nitrogen levels are low, the N-terminal adenylyl removase (AR) activates GlnA by removing the adenylyl group by phosphorolysis, increasing its activity. The regulatory region of GlnE binds the signal transduction protein PII (GlnB) which indicates the nitrogen status of the cell. The chain is Bifunctional glutamine synthetase adenylyltransferase/adenylyl-removing enzyme from Shigella flexneri.